Consider the following 453-residue polypeptide: MKETNSFSQKLKQFALLFFPIFVTQMSLFAMSFFDTTMSGHASPIDLAGVAIGTSIWIPVSTGLTGILMATTPIVAQLVGSKKKEDVPHVVIQAVYLAICASFVVILIGLFTVTPILNGMRLEEPVERIAAQFLSIIAIGIIPLFTYTVLRGFIDALGKTRTTMIITLLSLPINVVLNYVLIFGNFGFPKLGGVGAAIASAATYWCILIITVMIIRTKEPFASFNIFKQLYRPSLSSWKEFLKLGVPIGFAIFFETSIFAAVTLMMSNFSTTTIAAHQAAMNFASLLYMTPLSLAMAMTIAVGFEVGAKRYNNAKQYGFIGIGLALAFALLYSILLYFFDDEIASIYTTDIQVHHLAKEFLIFAILFQISDAIATPVQGALRGYKDVNVALIMTLIAYWVIGLPLGYILATYTDWAAKGYWIGLIIGLAFGATFLLIRLFQVQRKYTTQNSRS.

A run of 12 helical transmembrane segments spans residues 13–34 (QFALLFFPIFVTQMSLFAMSFF), 49–71 (GVAIGTSIWIPVSTGLTGILMAT), 92–114 (IQAVYLAICASFVVILIGLFTVT), 129–151 (IAAQFLSIIAIGIIPLFTYTVLR), 164–183 (MIITLLSLPINVVLNYVLIF), 193–215 (GVGAAIASAATYWCILIITVMII), 244–266 (LGVPIGFAIFFETSIFAAVTLMM), 286–308 (LLYMTPLSLAMAMTIAVGFEVGA), 317–339 (YGFIGIGLALAFALLYSILLYFF), 359–381 (EFLIFAILFQISDAIATPVQGAL), 388–410 (NVALIMTLIAYWVIGLPLGYILA), and 420–442 (YWIGLIIGLAFGATFLLIRLFQV).

It belongs to the multi antimicrobial extrusion (MATE) (TC 2.A.66.1) family.

The protein localises to the cell membrane. Its function is as follows. Multidrug efflux pump. The sequence is that of Probable multidrug resistance protein NorM (norM) from Bacillus thuringiensis subsp. konkukian (strain 97-27).